The following is a 252-amino-acid chain: Triosephosphate isomerase (252 aa).

Substrate is bound at residue 9 to 11 (NWK). The Electrophile role is filled by His-96. The active-site Proton acceptor is Glu-166. Substrate contacts are provided by residues Gly-172, Ser-212, and 233–234 (GG).

The protein belongs to the triosephosphate isomerase family. In terms of assembly, homodimer.

It is found in the cytoplasm. The enzyme catalyses D-glyceraldehyde 3-phosphate = dihydroxyacetone phosphate. Its pathway is carbohydrate biosynthesis; gluconeogenesis. The protein operates within carbohydrate degradation; glycolysis; D-glyceraldehyde 3-phosphate from glycerone phosphate: step 1/1. Involved in the gluconeogenesis. Catalyzes stereospecifically the conversion of dihydroxyacetone phosphate (DHAP) to D-glyceraldehyde-3-phosphate (G3P). The protein is Triosephosphate isomerase of Chlorobium chlorochromatii (strain CaD3).